The primary structure comprises 190 residues: Threonylcarbamoyl-AMP synthase (190 aa).

In terms of domain architecture, YrdC-like spans 7–190 (TGSSAAVVDL…ALTGELFRQG (184 aa)).

The protein belongs to the SUA5 family. TsaC subfamily.

The protein localises to the cytoplasm. The enzyme catalyses L-threonine + hydrogencarbonate + ATP = L-threonylcarbamoyladenylate + diphosphate + H2O. Functionally, required for the formation of a threonylcarbamoyl group on adenosine at position 37 (t(6)A37) in tRNAs that read codons beginning with adenine. Catalyzes the conversion of L-threonine, HCO(3)(-)/CO(2) and ATP to give threonylcarbamoyl-AMP (TC-AMP) as the acyladenylate intermediate, with the release of diphosphate. The chain is Threonylcarbamoyl-AMP synthase from Salmonella typhi.